The chain runs to 215 residues: Adenylate kinase (215 aa).

An ATP-binding site is contributed by Gly-10–Thr-15. The interval Ser-30–Val-59 is NMP. AMP-binding positions include Thr-31, Arg-36, Gly-57–Val-59, Gly-85–Arg-88, and Gln-92. Residues Gly-122–Asp-159 form an LID region. Residues Arg-123 and Val-132–Tyr-133 contribute to the ATP site. Arg-156 and Arg-167 together coordinate AMP. Residue Gly-201 coordinates ATP.

The protein belongs to the adenylate kinase family. Monomer.

The protein resides in the cytoplasm. It carries out the reaction AMP + ATP = 2 ADP. It participates in purine metabolism; AMP biosynthesis via salvage pathway; AMP from ADP: step 1/1. Functionally, catalyzes the reversible transfer of the terminal phosphate group between ATP and AMP. Plays an important role in cellular energy homeostasis and in adenine nucleotide metabolism. The polypeptide is Adenylate kinase (Azotobacter vinelandii (strain DJ / ATCC BAA-1303)).